A 254-amino-acid chain; its full sequence is uncharacterized protein (254 aa).

The region spanning 14–81 is the S4 RNA-binding domain; sequence IRLQKVLSQA…DSLVYLALNK (68 aa). Asp119 (nucleophile) is an active-site residue.

The protein belongs to the pseudouridine synthase RsuA family.

The enzyme catalyses a uridine in RNA = a pseudouridine in RNA. This is an uncharacterized protein from Mycobacterium bovis (strain ATCC BAA-935 / AF2122/97).